A 119-amino-acid polypeptide reads, in one-letter code: Fluoride-specific ion channel FluC 1 (119 aa).

4 consecutive transmembrane segments (helical) span residues 2-22 (TGAV…GAVL), 37-57 (AGTL…TFAA), 62-82 (TMLL…SFSV), and 99-119 (HALG…LLVA). Residues Gly72 and Thr75 each coordinate Na(+).

The protein belongs to the fluoride channel Fluc/FEX (TC 1.A.43) family.

It localises to the cell membrane. It carries out the reaction fluoride(in) = fluoride(out). Its activity is regulated as follows. Na(+) is not transported, but it plays an essential structural role and its presence is essential for fluoride channel function. Its function is as follows. Fluoride-specific ion channel. Important for reducing fluoride concentration in the cell, thus reducing its toxicity. The protein is Fluoride-specific ion channel FluC 1 of Halobacterium salinarum (strain ATCC 700922 / JCM 11081 / NRC-1) (Halobacterium halobium).